The primary structure comprises 100 residues: Integration host factor subunit alpha (100 aa).

The tract at residues 53 to 72 (FDLRDKRQRPGRNPKTGEEI) is disordered.

The protein belongs to the bacterial histone-like protein family. As to quaternary structure, heterodimer of an alpha and a beta chain.

Functionally, this protein is one of the two subunits of integration host factor, a specific DNA-binding protein that functions in genetic recombination as well as in transcriptional and translational control. The chain is Integration host factor subunit alpha from Stutzerimonas stutzeri (strain A1501) (Pseudomonas stutzeri).